The chain runs to 776 residues: Transferrin receptor protein 1 (776 aa).

The Cytoplasmic segment spans residues 1–70 (MDHARAALSN…QPQRNGKRLC (70 aa)). The Endocytosis signal motif lies at 19–22 (YTRF). Phosphoserine is present on S23. C70 carries S-palmitoyl cysteine lipidation. A helical; Signal-anchor for type II membrane protein transmembrane segment spans residues 71–91 (FLVIAAVLLLLIGFLIGYLSY). The Extracellular segment spans residues 92–776 (RGRIELAARC…GDIWETDNEF (685 aa)). The PA domain maps to 230 to 322 (SESGSVSGKP…GTGDPYTPGF (93 aa)). 3 N-linked (GlcNAc...) asparagine glycosylation sites follow: N261, N326, and N391. The tract at residues 586–776 (KGDTLENLRK…GDIWETDNEF (191 aa)) is ligand-binding. The Cell attachment site signature appears at 662-664 (RGD). N-linked (GlcNAc...) asparagine glycosylation is present at N738.

The protein belongs to the peptidase M28 family. M28B subfamily. As to quaternary structure, homodimer; disulfide-linked. Binds one transferrin molecule per subunit. Stearoylated. Stearoylation does not affect iron uptake. Post-translationally, N- and O-glycosylated, phosphorylated and palmitoylated.

It localises to the cell membrane. The protein resides in the melanosome. Its function is as follows. Cellular uptake of iron occurs via receptor-mediated endocytosis of ligand-occupied transferrin receptor into specialized endosomes. Endosomal acidification leads to iron release. The apotransferrin-receptor complex is then recycled to the cell surface with a return to neutral pH and the concomitant loss of affinity of apotransferrin for its receptor. Transferrin receptor is necessary for development of erythrocytes and the nervous system. Acts as a lipid sensor that regulates mitochondrial fusion by regulating activation of the JNK pathway. When dietary levels of stearate (C18:0) are low, promotes activation of the JNK pathway, resulting in HUWE1-mediated ubiquitination and subsequent degradation of the mitofusin MFN2 and inhibition of mitochondrial fusion. When dietary levels of stearate (C18:0) are high, TFRC stearoylation inhibits activation of the JNK pathway and thus degradation of the mitofusin MFN2. Mediates uptake of NICOL1 into fibroblasts where it may regulate extracellular matrix production. In Gallus gallus (Chicken), this protein is Transferrin receptor protein 1 (TFRC).